We begin with the raw amino-acid sequence, 143 residues long: Interleukin-4 (143 aa).

Positions 1 to 19 are cleaved as a signal peptide; that stretch reads MGLSPQLAAVLLCLLVCTG. Intrachain disulfides connect Cys48-Cys88 and Cys70-Cys115. Residues Asn62 and Asn91 are each glycosylated (N-linked (GlcNAc...) asparagine).

The protein belongs to the IL-4/IL-13 family.

The protein resides in the secreted. Participates in at least several B-cell activation processes as well as of other cell types. It is a costimulator of DNA-synthesis. It induces the expression of class II MHC molecules on resting B-cells. It enhances both secretion and cell surface expression of IgE and IgG1. It also regulates the expression of the low affinity Fc receptor for IgE (CD23) on both lymphocytes and monocytes. Positively regulates IL31RA expression in macrophages. Stimulates autophagy in dendritic cells by interfering with mTORC1 signaling and through the induction of RUFY4. This Meriones unguiculatus (Mongolian jird) protein is Interleukin-4 (IL4).